Consider the following 198-residue polypeptide: Synaptobrevin homolog YKT6 (198 aa).

Residues Val-8–His-126 enclose the Longin domain. One can recognise a v-SNARE coiled-coil homology domain in the interval Pro-138–Met-198. Position 159 is a phosphoserine (Ser-159). The S-palmitoyl cysteine moiety is linked to residue Cys-194. Cys-195 is subject to Cysteine methyl ester. Cys-195 carries S-farnesyl cysteine lipidation. The propeptide at Ala-196–Met-198 is removed in mature form.

It belongs to the synaptobrevin family. As to quaternary structure, identified in 2 different SNARE complexes; the first one composed of GOSR1, GOSR2 and STX5 and the second one composed of BET1L, GOSR1 and STX5. Palmitoylated; catalyzes its own palmitoylation. Palmitoylation is required for Golgi targeting. In terms of processing, farnesylation is required for Golgi targeting.

The protein resides in the cytoplasm. It localises to the cytosol. Its subcellular location is the cytoplasmic vesicle membrane. The protein localises to the golgi apparatus membrane. Its function is as follows. Vesicular soluble NSF attachment protein receptor (v-SNARE) mediating vesicle docking and fusion to a specific acceptor cellular compartment. Functions in endoplasmic reticulum to Golgi transport; as part of a SNARE complex composed of GOSR1, GOSR2 and STX5. Functions in early/recycling endosome to TGN transport; as part of a SNARE complex composed of BET1L, GOSR1 and STX5. Has a S-palmitoyl transferase activity. The sequence is that of Synaptobrevin homolog YKT6 (YKT6) from Homo sapiens (Human).